We begin with the raw amino-acid sequence, 630 residues long: Chaperone protein DnaK (630 aa).

Thr197 is modified (phosphothreonine; by autocatalysis). The span at 604–618 (KNNESVKNNESVKNN) shows a compositional bias: polar residues. The segment at 604-630 (KNNESVKNNESVKNNESVKDVDFEEIK) is disordered. Residues 619-630 (ESVKDVDFEEIK) are compositionally biased toward basic and acidic residues.

The protein belongs to the heat shock protein 70 family.

Functionally, acts as a chaperone. This is Chaperone protein DnaK from Karelsulcia muelleri (strain GWSS) (Sulcia muelleri).